A 238-amino-acid chain; its full sequence is Enolase-phosphatase E1 (238 aa).

Residues aspartate 14 and glutamate 16 each contribute to the Mg(2+) site. Residues 128-129 and lysine 165 contribute to the substrate site; that span reads SS. A Mg(2+)-binding site is contributed by aspartate 192.

This sequence belongs to the HAD-like hydrolase superfamily. MasA/MtnC family. As to quaternary structure, monomer. Mg(2+) serves as cofactor.

It is found in the cytoplasm. It localises to the nucleus. The enzyme catalyses 5-methylsulfanyl-2,3-dioxopentyl phosphate + H2O = 1,2-dihydroxy-5-(methylsulfanyl)pent-1-en-3-one + phosphate. The protein operates within amino-acid biosynthesis; L-methionine biosynthesis via salvage pathway; L-methionine from S-methyl-5-thio-alpha-D-ribose 1-phosphate: step 3/6. It participates in amino-acid biosynthesis; L-methionine biosynthesis via salvage pathway; L-methionine from S-methyl-5-thio-alpha-D-ribose 1-phosphate: step 4/6. Its function is as follows. Bifunctional enzyme that catalyzes the enolization of 2,3-diketo-5-methylthiopentyl-1-phosphate (DK-MTP-1-P) into the intermediate 2-hydroxy-3-keto-5-methylthiopentenyl-1-phosphate (HK-MTPenyl-1-P), which is then dephosphorylated to form the acireductone 1,2-dihydroxy-3-keto-5-methylthiopentene (DHK-MTPene). In Fusarium vanettenii (strain ATCC MYA-4622 / CBS 123669 / FGSC 9596 / NRRL 45880 / 77-13-4) (Fusarium solani subsp. pisi), this protein is Enolase-phosphatase E1.